The following is a 244-amino-acid chain: ATP synthase subunit a (244 aa).

Helical transmembrane passes span 25–45 (ISFT…LLIF), 85–105 (YFAF…FGMI), 115–135 (IIVT…IGFM), 144–164 (LFVP…IEII), 193–213 (GFVI…SVAL), and 216–236 (LEIL…CIYL).

Belongs to the ATPase A chain family. In terms of assembly, F-type ATPases have 2 components, CF(1) - the catalytic core - and CF(0) - the membrane proton channel. CF(1) has five subunits: alpha(3), beta(3), gamma(1), delta(1), epsilon(1). CF(0) has three main subunits: a(1), b(2) and c(9-12). The alpha and beta chains form an alternating ring which encloses part of the gamma chain. CF(1) is attached to CF(0) by a central stalk formed by the gamma and epsilon chains, while a peripheral stalk is formed by the delta and b chains.

It localises to the cell inner membrane. In terms of biological role, key component of the proton channel; it plays a direct role in the translocation of protons across the membrane. This Pelagibacter ubique (strain HTCC1062) protein is ATP synthase subunit a.